We begin with the raw amino-acid sequence, 224 residues long: Putative adhesin A1E_05320 (224 aa).

Residues 1 to 22 (MKKLLLIAATSATMLSSTLSFA) form the signal peptide.

The sequence is that of Putative adhesin A1E_05320 from Rickettsia canadensis (strain McKiel).